Reading from the N-terminus, the 29-residue chain is Cycloviolacin-O15 (29 aa).

Residues 1-29 constitute a cross-link (cyclopeptide (Gly-Asn)); the sequence is GLVPCGETCFTGKCYTPGCSCSYPICKKN. Intrachain disulfides connect C5-C19, C9-C21, and C14-C26.

This is a cyclic peptide.

Probably participates in a plant defense mechanism. Has hemolytic activity. The sequence is that of Cycloviolacin-O15 from Viola odorata (Sweet violet).